The primary structure comprises 925 residues: Ubp5-interacting protein ftp105 (925 aa).

A compositionally biased stretch (low complexity) spans 650-664 (EGSSDFESKSSDNTS). Residues 650–671 (EGSSDFESKSSDNTSLDGTPLQ) form a disordered region.

The protein belongs to the hid-1 family. In terms of assembly, interacts with ubp5.

The protein resides in the cytoplasm. The protein localises to the golgi apparatus. Its function is as follows. Required for the localization of ubp5 to the Golgi apparatus. Involved in detoxification of cadmium ion. This is Ubp5-interacting protein ftp105 (ftp105) from Schizosaccharomyces pombe (strain 972 / ATCC 24843) (Fission yeast).